A 207-amino-acid chain; its full sequence is MSKGILGKKVGMTQIFTENGELIPVTVIEATPNTVLQVKSVETDGYEATQVGFDTLREVLTNKPAKGHAAKANTTPKRFVREFKGLEGAEVGAEITVDTFAAGDVVDVTGTSKGKGFQGPIKRHGQSRGPMAHGSRYHRRPGSMGPVAANKVPKGKKLAGRMGNKRVTVQNLVIAQVLPEKNVILVKGNVPGAKKSLIVVKSAIKAK.

The tract at residues 113–148 (KGKGFQGPIKRHGQSRGPMAHGSRYHRRPGSMGPVA) is disordered.

The protein belongs to the universal ribosomal protein uL3 family. Part of the 50S ribosomal subunit. Forms a cluster with proteins L14 and L19.

Its function is as follows. One of the primary rRNA binding proteins, it binds directly near the 3'-end of the 23S rRNA, where it nucleates assembly of the 50S subunit. This Lactococcus lactis subsp. lactis (strain IL1403) (Streptococcus lactis) protein is Large ribosomal subunit protein uL3.